A 238-amino-acid polypeptide reads, in one-letter code: MGKPSSKEERVHHVFENIYSKYDSMNSIISFQRHKSWRKDTMKRMNVQAGETALDVCCGTGDWSISLSEAVGQTGKVIGLDFSKNMLSIAKQKKQDLQLNQLELVHGNAMELPYEENSFDYVTIGFGLRNVPDYMTVLEEMYRVVKPGGKVVCIETSQPTLIGYRQAYYFYFKFIMPILGKLIAKSYKEYSWLQESAKDFPGKKELKEMFLNAGFDKVEMKSYTGGVAAMHMGFKASQ.

S-adenosyl-L-methionine contacts are provided by residues T60, D81, and 108 to 109 (NA).

The protein belongs to the class I-like SAM-binding methyltransferase superfamily. MenG/UbiE family.

It catalyses the reaction a 2-demethylmenaquinol + S-adenosyl-L-methionine = a menaquinol + S-adenosyl-L-homocysteine + H(+). Its pathway is quinol/quinone metabolism; menaquinone biosynthesis; menaquinol from 1,4-dihydroxy-2-naphthoate: step 2/2. In terms of biological role, methyltransferase required for the conversion of demethylmenaquinol (DMKH2) to menaquinol (MKH2). The protein is Demethylmenaquinone methyltransferase of Oceanobacillus iheyensis (strain DSM 14371 / CIP 107618 / JCM 11309 / KCTC 3954 / HTE831).